Reading from the N-terminus, the 177-residue chain is Inner membrane-spanning protein YciB (177 aa).

Transmembrane regions (helical) follow at residues 22-42, 50-70, 76-96, 121-141, and 151-171; these read IFIA…LYWI, INLF…IFHN, WKIT…QFFM, FFWA…ALCL, and VFGL…YINF.

This sequence belongs to the YciB family.

It is found in the cell inner membrane. Functionally, plays a role in cell envelope biogenesis, maintenance of cell envelope integrity and membrane homeostasis. In Buchnera aphidicola subsp. Schizaphis graminum (strain Sg), this protein is Inner membrane-spanning protein YciB.